We begin with the raw amino-acid sequence, 310 residues long: Cytosolic Fe-S cluster assembly factor Nubp1 homolog (310 aa).

Residues Cys9, Cys23, Cys26, and Cys32 each contribute to the [4Fe-4S] cluster site. Position 63 to 70 (63 to 70) interacts with ATP; that stretch reads GKGGVGKS. [4Fe-4S] cluster-binding residues include Cys240 and Cys243.

This sequence belongs to the Mrp/NBP35 ATP-binding proteins family. NUBP1/NBP35 subfamily. In terms of assembly, heterotetramer of 2 Nubp1 and 2 Nubp2 chains. It depends on [4Fe-4S] cluster as a cofactor.

Its subcellular location is the cytoplasm. Component of the cytosolic iron-sulfur (Fe/S) protein assembly (CIA) machinery. Required for maturation of extramitochondrial Fe-S proteins. The Nubp1-Nubp2 heterotetramer forms a Fe-S scaffold complex, mediating the de novo assembly of an Fe-S cluster and its transfer to target apoproteins. This Drosophila mojavensis (Fruit fly) protein is Cytosolic Fe-S cluster assembly factor Nubp1 homolog.